An 890-amino-acid chain; its full sequence is Translation initiation factor IF-2 (890 aa).

The disordered stretch occupies residues 110–216 (ISKPISKAPQ…KKPLIKTQDH (107 aa)). Residues 135–148 (VPKRKGLVIIKKKR) are compositionally biased toward basic residues. Over residues 184–199 (KSYNEPKNKENDDIKK) the composition is skewed to basic and acidic residues. Residues 200 to 210 (QKVKKEKKKPL) show a composition bias toward basic residues. The 168-residue stretch at 387–554 (TRPPVVTIMG…NILLQAEILE (168 aa)) folds into the tr-type G domain. The interval 396–403 (GHVDHGKT) is G1. Position 396–403 (396–403 (GHVDHGKT)) interacts with GTP. Residues 421–425 (GITQH) form a G2 region. A G3 region spans residues 442 to 445 (DTPG). GTP-binding positions include 442–446 (DTPGH) and 496–499 (NKMD). The G4 stretch occupies residues 496–499 (NKMD). Residues 532–534 (SAR) are G5.

It belongs to the TRAFAC class translation factor GTPase superfamily. Classic translation factor GTPase family. IF-2 subfamily.

It localises to the cytoplasm. Its function is as follows. One of the essential components for the initiation of protein synthesis. Protects formylmethionyl-tRNA from spontaneous hydrolysis and promotes its binding to the 30S ribosomal subunits. Also involved in the hydrolysis of GTP during the formation of the 70S ribosomal complex. In Aliarcobacter butzleri (strain RM4018) (Arcobacter butzleri), this protein is Translation initiation factor IF-2.